Consider the following 350-residue polypeptide: D-alanine--D-alanine ligase (350 aa).

Residues 133–334 form the ATP-grasp domain; that stretch reads NDIFELNKIP…VSEVFDNLIG (202 aa). ATP is bound at residue 161-216; that stretch reads FEKTSKAVYVKPCNAGSSVGVMRAETEEELEKAIQNAFQYDRRILVEEEIIGPELQ. Residues aspartate 288, glutamate 300, and asparagine 302 each contribute to the Mg(2+) site.

It belongs to the D-alanine--D-alanine ligase family. The cofactor is Mg(2+). Mn(2+) serves as cofactor.

It is found in the cytoplasm. The catalysed reaction is 2 D-alanine + ATP = D-alanyl-D-alanine + ADP + phosphate + H(+). It functions in the pathway cell wall biogenesis; peptidoglycan biosynthesis. Cell wall formation. The polypeptide is D-alanine--D-alanine ligase (Finegoldia magna (strain ATCC 29328 / DSM 20472 / WAL 2508) (Peptostreptococcus magnus)).